The primary structure comprises 122 residues: Large ribosomal subunit protein bL17 (122 aa).

This sequence belongs to the bacterial ribosomal protein bL17 family. In terms of assembly, part of the 50S ribosomal subunit. Contacts protein L32.

The protein is Large ribosomal subunit protein bL17 of Neisseria gonorrhoeae (strain ATCC 700825 / FA 1090).